The sequence spans 181 residues: Large ribosomal subunit protein eL18 (181 aa).

Residues 152 to 181 (WGKAPGQRGSHSAPYVRSEGRKFERAHGLK) are disordered. Residues 169–181 (SEGRKFERAHGLK) show a composition bias toward basic and acidic residues.

The protein belongs to the eukaryotic ribosomal protein eL18 family.

The protein localises to the cytoplasm. In Tetrahymena thermophila, this protein is Large ribosomal subunit protein eL18 (RPL18).